We begin with the raw amino-acid sequence, 97 residues long: Protein RnfH (97 aa).

This sequence belongs to the UPF0125 (RnfH) family.

This is Protein RnfH from Halorhodospira halophila (strain DSM 244 / SL1) (Ectothiorhodospira halophila (strain DSM 244 / SL1)).